The following is a 155-amino-acid chain: SsrA-binding protein (155 aa).

Belongs to the SmpB family.

The protein localises to the cytoplasm. In terms of biological role, required for rescue of stalled ribosomes mediated by trans-translation. Binds to transfer-messenger RNA (tmRNA), required for stable association of tmRNA with ribosomes. tmRNA and SmpB together mimic tRNA shape, replacing the anticodon stem-loop with SmpB. tmRNA is encoded by the ssrA gene; the 2 termini fold to resemble tRNA(Ala) and it encodes a 'tag peptide', a short internal open reading frame. During trans-translation Ala-aminoacylated tmRNA acts like a tRNA, entering the A-site of stalled ribosomes, displacing the stalled mRNA. The ribosome then switches to translate the ORF on the tmRNA; the nascent peptide is terminated with the 'tag peptide' encoded by the tmRNA and targeted for degradation. The ribosome is freed to recommence translation, which seems to be the essential function of trans-translation. The chain is SsrA-binding protein from Helicobacter hepaticus (strain ATCC 51449 / 3B1).